Here is a 413-residue protein sequence, read N- to C-terminus: Type II methyltransferase M.NaeI (413 aa).

The region spanning 4–317 (LEVVEICAGA…KRIRAALNME (314 aa)) is the SAM-dependent MTase C5-type domain. The active site involves Cys78.

It belongs to the class I-like SAM-binding methyltransferase superfamily. C5-methyltransferase family.

It catalyses the reaction a 2'-deoxycytidine in DNA + S-adenosyl-L-methionine = a 5-methyl-2'-deoxycytidine in DNA + S-adenosyl-L-homocysteine + H(+). A methylase that recognizes the double-stranded sequence 5'-GCCGGC-3', methylates C-? on both strands, and protects the DNA from cleavage by the NaeI endonuclease. The chain is Type II methyltransferase M.NaeI from Lentzea aerocolonigenes (Lechevalieria aerocolonigenes).